A 538-amino-acid polypeptide reads, in one-letter code: Syncytin-2 (538 aa).

Positions 1–15 (MGLLLLVLILTPLLA) are cleaved as a signal peptide. At 31 to 478 (LLQSTGSPYS…GWLNWEGTWK (448 aa)) the chain is on the extracellular side. Positions 43-46 (CWLC) match the CXXC motif. Intrachain disulfides connect cysteine 43/cysteine 46, cysteine 43/cysteine 439, and cysteine 431/cysteine 438. N-linked (GlcNAc...) asparagine glycans are attached at residues asparagine 133, asparagine 146, asparagine 177, asparagine 220, asparagine 241, asparagine 247, asparagine 312, and asparagine 332. The tract at residues 354-374 (FIPLLAGLGILAGTGTGIAGI) is fusion peptide. The CKS-17 motif lies at 414–430 (LQNRRGLDMLTAAQGGI). Positions 431-439 (CLALDEKCC) match the CX6CC motif. Asparagine 443 carries N-linked (GlcNAc...) asparagine glycosylation. A helical membrane pass occupies residues 479 to 499 (WFSWVLPFIGPFVSLLLLLLF). The Cytoplasmic portion of the chain corresponds to 500-538 (GPCLLNLITQFVSSRLQAIKLQTNLSAGRRPRTIQESPF).

It belongs to the gamma type-C retroviral envelope protein family. HERV class-I FRD env subfamily. In terms of assembly, the surface and transmembrane proteins form a heterodimer. They are attached by non-covalent interactions or by a labile interchain disulfide bond. Specific enzymatic cleavages in vivo yield the mature SU and TM proteins. Post-translationally, the CXXC motif is highly conserved across a broad range of retroviral envelope proteins. It is thought to participate in the formation of a labile disulfide bond possibly with the CX6CC motif present in the transmembrane protein.

It localises to the cell membrane. Its function is as follows. This endogenous retroviral envelope protein has retained its original fusogenic properties and participates in trophoblast fusion and the formation of a syncytium during placenta morphogenesis. The interaction with MFSD2A is apparently important for this process. In terms of biological role, endogenous envelope proteins may have kept, lost or modified their original function during evolution and this one is unable to confer infectivity. The polypeptide is Syncytin-2 (ERVFRD-1) (Hylobates moloch (Silvery gibbon)).